The sequence spans 224 residues: Small ribosomal subunit protein uS3 (224 aa).

Positions 39–107 (IREFLKKKPS…DVWVEIAEVK (69 aa)) constitute a KH type-2 domain.

This sequence belongs to the universal ribosomal protein uS3 family. In terms of assembly, part of the 30S ribosomal subunit. Forms a tight complex with proteins S10 and S14.

In terms of biological role, binds the lower part of the 30S subunit head. Binds mRNA in the 70S ribosome, positioning it for translation. The chain is Small ribosomal subunit protein uS3 from Chlamydia trachomatis serovar L2 (strain ATCC VR-902B / DSM 19102 / 434/Bu).